A 299-amino-acid polypeptide reads, in one-letter code: Recombination-associated protein RdgC (299 aa).

This sequence belongs to the RdgC family.

Its subcellular location is the cytoplasm. The protein localises to the nucleoid. In terms of biological role, may be involved in recombination. The protein is Recombination-associated protein RdgC of Cupriavidus necator (strain ATCC 17699 / DSM 428 / KCTC 22496 / NCIMB 10442 / H16 / Stanier 337) (Ralstonia eutropha).